We begin with the raw amino-acid sequence, 389 residues long: GDSL esterase/lipase At5g14450 (389 aa).

Residues 1-30 form the signal peptide; sequence MKDNLERAKLMVSSTVFSWLLLCLFAVTTS. Residue S48 is the Nucleophile of the active site. N-linked (GlcNAc...) asparagine glycans are attached at residues N125 and N335. Active-site residues include D354 and H357.

Belongs to the 'GDSL' lipolytic enzyme family.

The protein localises to the secreted. This is GDSL esterase/lipase At5g14450 from Arabidopsis thaliana (Mouse-ear cress).